Here is a 401-residue protein sequence, read N- to C-terminus: Voltage-gated potassium channel subunit beta-1 (401 aa).

Residues Thr-90, Trp-91, Gln-97, and Asp-119 each coordinate NADP(+). Tyr-124 serves as the catalytic Proton donor/acceptor. Positions 192, 222, 223, 248, 277, 278, 279, 280, 281, 282, 288, 298, 357, 359, 363, 366, and 367 each coordinate NADP(+).

Belongs to the shaker potassium channel beta subunit family. Homotetramer. Interaction with tetrameric potassium channel alpha subunits gives rise to a heterooctamer. Identified in potassium channel complexes containing KCNA1, KCNA2, KCNA4, KCNA5, KCNA6, KCNAB1 and KCNAB2. Part of a complex containing KCNA1, KCNA4 and LGI1; interaction with LGI1 inhibits down-regulation of KCNA1 channel activity. Interacts with the dimer formed by GNB1 and GNG2; this enhances KCNA1 binding. Interacts with SQSTM. As to expression, detected in brain, in hippocampus and striatum (at protein level). Predominantly expressed in brain. No expression found in heart, skeletal muscle or kidney. In the late embryonic and early neonatal brain, highly expressed in hippocampus, cerebral cortex, caudate putamen, colliculus and cerebellum.

It localises to the cytoplasm. Its subcellular location is the membrane. The protein localises to the cell membrane. It catalyses the reaction a primary alcohol + NADP(+) = an aldehyde + NADPH + H(+). The catalysed reaction is a secondary alcohol + NADP(+) = a ketone + NADPH + H(+). Functionally, regulatory subunit of the voltage-gated potassium (Kv) Shaker channels composed of pore-forming and potassium-conducting alpha subunits and of regulatory beta subunits. The beta-1/KCNAB1 cytoplasmic subunit mediates closure of delayed rectifier potassium channels by physically obstructing the pore via its N-terminal domain and increases the speed of channel closure for other family members. Promotes the inactivation of KCNA1, KCNA2, KCNA4, KCNA5 and KCNA6 alpha subunit-containing channels. Displays nicotinamide adenine dinucleotide phosphate (NADPH)-dependent aldoketoreductase activity by catalyzing the NADPH-dependent reduction of a variety of endogenous aldehydes and ketones. The binding of NADPH is required for efficient down-regulation of potassium channel activity. Oxidation of the bound NADPH restrains N-terminal domain from blocking the channel, thereby decreasing N-type inactivation of potassium channel activity. The sequence is that of Voltage-gated potassium channel subunit beta-1 from Mus musculus (Mouse).